The sequence spans 585 residues: Involucrin (585 aa).

A compositionally biased stretch (polar residues) spans 1-15 (MSQQHTLPVTLSPAL). A disordered region spans residues 1-132 (MSQQHTLPVT…LEEEKKLLDQ (132 aa)). Residue Q79 is the site of Omega-hydroxyceramide glutamate ester attachment. Basic and acidic residues predominate over residues 92 to 115 (WEQHEEYQKAENPEQQLKQEKTQR). 2 omega-hydroxyceramide glutamate ester lipidation sites follow: Q118 and Q133. The disordered stretch occupies residues 149–540 (KEQLLELPEQ…KDLEQQKGQL (392 aa)). 23 consecutive repeat copies span residues 153 to 162 (LELPEQQEGH), 163 to 172 (LKHLEQQEGQ), 173 to 182 (LKHPEQQEGQ), 183 to 192 (LELPEQQEGQ), 193 to 202 (LELPEQQEGQ), 203 to 212 (LELPEQQEGQ), 213 to 222 (LELPEQQEGQ), 223 to 232 (LELPEQQEGQ), 233 to 242 (LELPQQQEGQ), 243 to 252 (LELSEQQEGQ), 253 to 262 (LELSEQQEGQ), 263 to 272 (LKHLEHQEGQ), 273 to 282 (LEVPEEQMGQ), 283 to 292 (LKYLEQQEGQ), 293 to 302 (LKHLDQQEKQ), 303 to 312 (PELPEQQMGQ), 313 to 322 (LKHLEQQEGQ), 323 to 332 (PKHLEQQEGQ), 333 to 342 (LEQLEEQEGQ), 343 to 352 (LKHLEQQEGQ), 353 to 362 (LEHLEHQEGQ), 363 to 372 (LGLPEQQVLQ), and 373 to 382 (LKQLEKQQGQ). Residues 153–542 (LELPEQQEGH…LEQQKGQLEQ (390 aa)) are 39 X 10 AA approximate tandem repeats of [LP]-[EKG]-[LHVYQEK]-[PLSQE]-[EQDV]-[QHEKRGA]-Q-[EMVQLP]-[GKLE]-[QHVNLD]. Residues 159-178 (QEGHLKHLEQQEGQLKHPEQ) are compositionally biased toward basic and acidic residues. Residues 179-261 (QEGQLELPEQ…QLELSEQQEG (83 aa)) are compositionally biased toward low complexity. Over residues 262–271 (QLKHLEHQEG) the composition is skewed to basic and acidic residues. 3 stretches are compositionally biased toward basic and acidic residues: residues 292–304 (QLKH…KQPE), 314–328 (KHLE…HLEQ), and 341–360 (GQLK…EHQE). A compositionally biased stretch (low complexity) spans 361–383 (GQLGLPEQQVLQLKQLEKQQGQP). Residues 383-392 (PKHLEEEEGQ) form a 24; approximate repeat. The segment covering 384–393 (KHLEEEEGQL) has biased composition (basic and acidic residues). Tandem repeats lie at residues 393 to 402 (LKHLVQQEGQ), 403 to 412 (LKHLVQQEGQ), 413 to 422 (LEQQERQVEH), 423 to 432 (LEQQVGQLKH), 433 to 442 (LEEQEGQLKH), 443 to 452 (LEQQQGQLEV), 453 to 462 (PEQQVGQPKN), 463 to 472 (LEQEEKQLEL), 473 to 482 (PEQQEGQVKH), 483 to 492 (LEKQEAQLEL), and 493 to 502 (PEQQVGQPKH). 2 stretches are compositionally biased toward basic and acidic residues: residues 415–424 (QQERQVEHLE) and 431–444 (KHLE…KHLE). Over residues 445-462 (QQQGQLEVPEQQVGQPKN) the composition is skewed to low complexity. The span at 479-488 (QVKHLEKQEA) shows a compositional bias: basic and acidic residues. An Isoglutamyl lysine isopeptide (Gln-Lys) (interchain with K-? in other proteins) cross-link involves residue Q496. Over residues 501–535 (KHLEQQEKHLEHPEQQDGQLKHLEQQEGQLKDLEQ) the composition is skewed to basic and acidic residues. The 36; approximate repeat unit spans residues 503–512 (LEQQEKHLEH). 2 tandem repeats follow at residues 513-522 (PEQQDGQLKH) and 523-532 (LEQQEGQLKD). Residues 533–542 (LEQQKGQLEQ) form a 39; approximate repeat.

This sequence belongs to the involucrin family. As to quaternary structure, directly or indirectly cross-linked to cornifelin (CNFN). In terms of processing, substrate of transglutaminase. Some glutamines and lysines are cross-linked to other involucrin molecules, to other proteins such as keratin, desmoplakin, periplakin and envoplakin, and to lipids like omega-hydroxyceramide. As to expression, keratinocytes of epidermis and other stratified squamous epithelia.

The protein localises to the cytoplasm. Functionally, part of the insoluble cornified cell envelope (CE) of stratified squamous epithelia. The protein is Involucrin (IVL) of Homo sapiens (Human).